A 360-amino-acid chain; its full sequence is Cyclin-dependent kinase 10 (360 aa).

Residues 39–323 enclose the Protein kinase domain; that stretch reads FEKLNRIGEG…SGDCLESSYF (285 aa). ATP is bound by residues 45-53 and Lys-68; that span reads IGEGTYGIV. Asp-163 functions as the Proton acceptor in the catalytic mechanism. A Phosphothreonine modification is found at Thr-196. The segment at 334–360 is disordered; the sequence is LMPTFPHHRNKRAAPAAAEGQSKRCRP.

It belongs to the protein kinase superfamily. CMGC Ser/Thr protein kinase family. CDC2/CDKX subfamily. In terms of assembly, heterodimer with CCNQ, the interaction is required for kinase activity. Interacts with ETS2. Interacts with PRK2.

The protein resides in the cytoplasm. It is found in the cytoskeleton. Its subcellular location is the cilium basal body. It catalyses the reaction L-seryl-[protein] + ATP = O-phospho-L-seryl-[protein] + ADP + H(+). It carries out the reaction L-threonyl-[protein] + ATP = O-phospho-L-threonyl-[protein] + ADP + H(+). Cyclin-dependent kinase that phosphorylates the transcription factor ETS2 (in vitro) and positively controls its proteasomal degradation (in cells). Involved in the regulation of actin cytoskeleton organization through the phosphorylation of actin dynamics regulators such as PKN2. Is a negative regulator of ciliogenesis through phosphorylation of PKN2 and promotion of RhoA signaling. This Mus musculus (Mouse) protein is Cyclin-dependent kinase 10 (Cdk10).